The chain runs to 278 residues: NADPH-dependent 7-cyano-7-deazaguanine reductase (278 aa).

Residue 87–89 (IES) participates in substrate binding. An NADPH-binding site is contributed by 89–90 (SK). Cysteine 185 acts as the Thioimide intermediate in catalysis. Aspartate 192 acts as the Proton donor in catalysis. A substrate-binding site is contributed by 224–225 (HE). 253–254 (RG) provides a ligand contact to NADPH. The interval 255–278 (GLDINPYRSTNPTFSVQNHRSFRQ) is disordered. Residues 261 to 278 (YRSTNPTFSVQNHRSFRQ) are compositionally biased toward polar residues.

This sequence belongs to the GTP cyclohydrolase I family. QueF type 2 subfamily. As to quaternary structure, homodimer.

The protein localises to the cytoplasm. The enzyme catalyses 7-aminomethyl-7-carbaguanine + 2 NADP(+) = 7-cyano-7-deazaguanine + 2 NADPH + 3 H(+). It functions in the pathway tRNA modification; tRNA-queuosine biosynthesis. Catalyzes the NADPH-dependent reduction of 7-cyano-7-deazaguanine (preQ0) to 7-aminomethyl-7-deazaguanine (preQ1). The sequence is that of NADPH-dependent 7-cyano-7-deazaguanine reductase from Coxiella burnetii (strain CbuK_Q154) (Coxiella burnetii (strain Q154)).